The sequence spans 177 residues: MRERPRLGEDSSLISLFLQVVAFLAMVMGTHTYSHWPSCCPSKGQDTSEELLRWSTVPVPPLEPARPNRHPESCRASEDGPLNSRAISPWRYELDRDLNRLPQDLYHARCLCPHCVSLQTGSHMDPRGNSELLYHNQTVFYRRPCHGEKGTHKGYCLERRLYRVSLACVCVRPRVMG.

Residues Met1 to Thr32 form the signal peptide. The tract at residues Pro58–Pro81 is disordered. A compositionally biased stretch (basic and acidic residues) spans Arg69 to Glu78. Intrachain disulfides connect Cys110–Cys168 and Cys115–Cys170. A glycan (N-linked (GlcNAc...) asparagine) is linked at Asn136.

It belongs to the IL-17 family. In terms of tissue distribution, expressed at low levels in several tissues, including brain, kidney, lung, prostate, testis, spinal cord, adrenal gland, and trachea.

It is found in the secreted. Functionally, cytokine produced by various cells such as eosinophils, T-helper type 2 (Th2) cells or epithelial cells that plays a role in internal safety of adaptive immune responses by regulating cytokine production. Promotes and augments T-helper type 2 responses locally or systemically. Exerts its activity via its receptor composed of IL17RA and IL17RB for signal transduction. In turn, stimulates the JAK2-STAT5A pathway and promotes the secretion of type-2 associated cytokines including IL4, IL9 and IL13. Also induces the release of IL8, and IL6 from eosinophils through the combined activation of MAPK and NF-kappa-B pathways. Inhibits the differentiation of T-helper (Th17) cells via the production of IL4, IL5 and IL13. The chain is Interleukin-25 (IL25) from Homo sapiens (Human).